The chain runs to 380 residues: Bifunctional enzyme IspD/IspF (380 aa).

Residues methionine 1–isoleucine 224 form a 2-C-methyl-D-erythritol 4-phosphate cytidylyltransferase region. A 2-C-methyl-D-erythritol 2,4-cyclodiphosphate synthase region spans residues arginine 225–glycine 380. A divalent metal cation-binding residues include aspartate 231 and histidine 233. 4-CDP-2-C-methyl-D-erythritol 2-phosphate-binding positions include aspartate 231–histidine 233 and histidine 257–serine 258. Histidine 265 provides a ligand contact to a divalent metal cation. Residues aspartate 279–glycine 281, threonine 355–glutamate 358, phenylalanine 362, and arginine 365 each bind 4-CDP-2-C-methyl-D-erythritol 2-phosphate.

The protein in the N-terminal section; belongs to the IspD/TarI cytidylyltransferase family. IspD subfamily. In the C-terminal section; belongs to the IspF family. A divalent metal cation serves as cofactor.

It catalyses the reaction 2-C-methyl-D-erythritol 4-phosphate + CTP + H(+) = 4-CDP-2-C-methyl-D-erythritol + diphosphate. The enzyme catalyses 4-CDP-2-C-methyl-D-erythritol 2-phosphate = 2-C-methyl-D-erythritol 2,4-cyclic diphosphate + CMP. It participates in isoprenoid biosynthesis; isopentenyl diphosphate biosynthesis via DXP pathway; isopentenyl diphosphate from 1-deoxy-D-xylulose 5-phosphate: step 2/6. The protein operates within isoprenoid biosynthesis; isopentenyl diphosphate biosynthesis via DXP pathway; isopentenyl diphosphate from 1-deoxy-D-xylulose 5-phosphate: step 4/6. In terms of biological role, bifunctional enzyme that catalyzes the formation of 4-diphosphocytidyl-2-C-methyl-D-erythritol from CTP and 2-C-methyl-D-erythritol 4-phosphate (MEP) (IspD), and catalyzes the conversion of 4-diphosphocytidyl-2-C-methyl-D-erythritol 2-phosphate (CDP-ME2P) to 2-C-methyl-D-erythritol 2,4-cyclodiphosphate (ME-CPP) with a corresponding release of cytidine 5-monophosphate (CMP) (IspF). The sequence is that of Bifunctional enzyme IspD/IspF from Paracoccus denitrificans (strain Pd 1222).